Consider the following 305-residue polypeptide: Mas-related G-protein coupled receptor member A2B (305 aa).

Over 1 to 17 (MDETLPGSINIRILIPK) the chain is Extracellular. The chain crosses the membrane as a helical span at residues 18–38 (LMIIIFGLVGLMGNAIVFWLL). Residues 39–53 (GFHLRRNAFSVYILN) are Cytoplasmic-facing. Residues 54–74 (LALADFLFLLSSIIASTLFLL) form a helical membrane-spanning segment. Residues 75-78 (KVSY) lie on the Extracellular side of the membrane. A helical transmembrane segment spans residues 79–99 (LSIIFHLCFNTIMMVVYITGI). The Cytoplasmic segment spans residues 100–132 (SMLSAISTECCLSVLCPTWYRCHRPVHTSTVMC). A helical membrane pass occupies residues 133 to 153 (AVIWVLSLLICILNSYFCAVL). Over 154–167 (HTRYDNDNECLATN) the chain is Extracellular. The helical transmembrane segment at 168–188 (IFTASYMIFLLVVLCLSSLAL) threads the bilayer. Over 189 to 207 (LARLFCGAGQMKLTRFHVT) the chain is Cytoplasmic. Residues 208–228 (ILLTLLVFLLCGLPFVIYCIL) form a helical membrane-spanning segment. Over 229 to 244 (LFKIKDDFHVLDVNFY) the chain is Extracellular. Residues 245–265 (LALEVLTAINSCANPIIYFFV) traverse the membrane as a helical segment. The Cytoplasmic portion of the chain corresponds to 266-305 (GSFRHQLKHQTLKMVLQSALQDTPETAENMVEMSSNKAEP).

The protein belongs to the G-protein coupled receptor 1 family. Mas subfamily. As to expression, expressed in a subset of sensory neurons that includes nociceptors. Expressed in the subclass of non-peptidergic sensory neurons that are IB4(+) and VR1(-).

It localises to the cell membrane. Orphan receptor. May be a receptor for RFamide-family neuropeptides such as NPFF and NPAF, which are analgesic in vivo. May regulate nociceptor function and/or development, including the sensation or modulation of pain. The chain is Mas-related G-protein coupled receptor member A2B from Mus musculus (Mouse).